Reading from the N-terminus, the 432-residue chain is Bifunctional IPC transferase and DIPP synthase (432 aa).

The interval 3–225 (PERAVILAAG…RARRMLVRTA (223 aa)) is mobA-like NTP transferase. CTP contacts are provided by residues 9 to 11 (LAA), Lys-22, and Glu-113. Glu-113 contributes to the Mg(2+) binding site. The tract at residues 226-426 (VKGTGDGFVS…LTLYFVVKKV (201 aa)) is CDP-alcohol phosphatidyltransferases. 3 helical membrane passes run 264–284 (FLLG…AGIL), 337–356 (IWYF…SYST), and 385–405 (VFLT…ALFL).

In the N-terminal section; belongs to the MobA family. This sequence in the C-terminal section; belongs to the CDP-alcohol phosphatidyltransferase class-I family. Requires Mg(2+) as cofactor.

It is found in the membrane. The enzyme catalyses 1D-myo-inositol 3-phosphate + CTP + H(+) = CDP-1L-myo-inositol + diphosphate. The catalysed reaction is CDP-1L-myo-inositol + 1D-myo-inositol 3-phosphate = bis(1L-myo-inositol) 3,1'-phosphate 1-phosphate + CMP + H(+). Its function is as follows. Involved in biosynthesis of di-myo-inositol phosphate (DIP), a widespread organic solute in microorganisms adapted to hot environments. Catalyzes the condensation of CTP and L-myo-inositol-1-phosphate into CDP-L-myo-inositol, as well as the biosynthesis of di-myo-inositol-1,3'-phosphate-1'-phosphate (DIPP) from CDP-L-myo-inositol and L-myo-inositol-1-phosphate. This Thermococcus kodakarensis (strain ATCC BAA-918 / JCM 12380 / KOD1) (Pyrococcus kodakaraensis (strain KOD1)) protein is Bifunctional IPC transferase and DIPP synthase.